Here is a 338-residue protein sequence, read N- to C-terminus: Glycerol-3-phosphate dehydrogenase [NAD(P)+] (338 aa).

NADPH-binding residues include serine 14, tyrosine 15, histidine 35, and lysine 109. Residues lysine 109, glycine 138, and threonine 140 each coordinate sn-glycerol 3-phosphate. Alanine 142 contacts NADPH. Sn-glycerol 3-phosphate contacts are provided by lysine 194, aspartate 247, serine 257, arginine 258, and asparagine 259. Catalysis depends on lysine 194, which acts as the Proton acceptor. Arginine 258 contacts NADPH. Residues valine 282 and glutamate 284 each coordinate NADPH.

Belongs to the NAD-dependent glycerol-3-phosphate dehydrogenase family.

Its subcellular location is the cytoplasm. It carries out the reaction sn-glycerol 3-phosphate + NAD(+) = dihydroxyacetone phosphate + NADH + H(+). It catalyses the reaction sn-glycerol 3-phosphate + NADP(+) = dihydroxyacetone phosphate + NADPH + H(+). The protein operates within membrane lipid metabolism; glycerophospholipid metabolism. Catalyzes the reduction of the glycolytic intermediate dihydroxyacetone phosphate (DHAP) to sn-glycerol 3-phosphate (G3P), the key precursor for phospholipid synthesis. The protein is Glycerol-3-phosphate dehydrogenase [NAD(P)+] of Shewanella baltica (strain OS155 / ATCC BAA-1091).